Consider the following 380-residue polypeptide: Mitogen-activated protein kinase 3 (380 aa).

Ala2 is subject to N-acetylalanine. One can recognise a Protein kinase domain in the interval 43–331 (YTQLQYIGEG…VEEALAHPYL (289 aa)). ATP is bound by residues 49 to 57 (IGEGAYGMV) and Lys72. Asp167 acts as the Proton acceptor in catalysis. Phosphothreonine is present on Thr199. Thr203 is subject to Phosphothreonine; by MAP2K1 and MAP2K2. The TXY signature appears at 203 to 205 (TEY). Tyr205 carries the phosphotyrosine; by MAP2K1 and MAP2K2 modification. A Phosphothreonine; by autocatalysis modification is found at Thr208.

The protein belongs to the protein kinase superfamily. CMGC Ser/Thr protein kinase family. MAP kinase subfamily. Binds both upstream activators and downstream substrates in multimolecular complexes. Found in a complex with at least BRAF, HRAS, MAP2K1/MEK1, MAPK3 and RGS14. Interacts with ADAM15, ARRB2, CANX, DAPK1 (via death domain), HSF4, IER3, MAP2K1/MEK1, MORG1, NISCH, PEA15, SGK1 and MKNK2. MKNK2 isoform 1 binding prevents from dephosphorylation and inactivation. Interacts with TPR. Interacts with HSF1 (via D domain and preferentially with hyperphosphorylated form); this interaction occurs upon heat shock. Interacts with CDKN2AIP. Interacts with CAVIN4. Interacts with GIT1; this interaction is necessary for MAPK3 localization to focal adhesions. Interacts with ZNF263. Interacts with EBF4. Mg(2+) serves as cofactor. In terms of processing, phosphorylated upon FLT3 and KIT signaling. Ligand-activated ALK induces tyrosine phosphorylation. Dephosphorylated by PTPRJ at Tyr-205. Dually phosphorylated on Thr-203 and Tyr-205, which activates the enzyme. Post-translationally, ubiquitinated by TRIM15 via 'Lys-63'-linked ubiquitination; leading to activation. Deubiquitinated by CYLD. In terms of tissue distribution, highest levels within the nervous system, expressed in different tissues, mostly in intestine, placenta and lung.

It localises to the cytoplasm. Its subcellular location is the nucleus. The protein resides in the membrane. It is found in the caveola. The protein localises to the cell junction. It localises to the focal adhesion. The enzyme catalyses L-seryl-[protein] + ATP = O-phospho-L-seryl-[protein] + ADP + H(+). It catalyses the reaction L-threonyl-[protein] + ATP = O-phospho-L-threonyl-[protein] + ADP + H(+). Phosphorylated by MAP2K1/MEK1 and MAP2K2/MEK2 on Thr-203 and Tyr-205 in response to external stimuli like insulin or NGF. Both phosphorylations are required for activity. This phosphorylation causes dramatic conformational changes, which enable full activation and interaction of MAPK1/ERK2 with its substrates. Dephosphorylated and inactivated by DUSP3, DUSP6 and DUSP9. Functionally, serine/threonine kinase which acts as an essential component of the MAP kinase signal transduction pathway. MAPK1/ERK2 and MAPK3/ERK1 are the 2 MAPKs which play an important role in the MAPK/ERK cascade. They participate also in a signaling cascade initiated by activated KIT and KITLG/SCF. Depending on the cellular context, the MAPK/ERK cascade mediates diverse biological functions such as cell growth, adhesion, survival and differentiation through the regulation of transcription, translation, cytoskeletal rearrangements. The MAPK/ERK cascade also plays a role in initiation and regulation of meiosis, mitosis, and postmitotic functions in differentiated cells by phosphorylating a number of transcription factors. About 160 substrates have already been discovered for ERKs. Many of these substrates are localized in the nucleus, and seem to participate in the regulation of transcription upon stimulation. However, other substrates are found in the cytosol as well as in other cellular organelles, and those are responsible for processes such as translation, mitosis and apoptosis. Moreover, the MAPK/ERK cascade is also involved in the regulation of the endosomal dynamics, including lysosome processing and endosome cycling through the perinuclear recycling compartment (PNRC); as well as in the fragmentation of the Golgi apparatus during mitosis. The substrates include transcription factors (such as ATF2, BCL6, ELK1, ERF, FOS, HSF4 or SPZ1), cytoskeletal elements (such as CANX, CTTN, GJA1, MAP2, MAPT, PXN, SORBS3 or STMN1), regulators of apoptosis (such as BAD, BTG2, CASP9, DAPK1, IER3, MCL1 or PPARG), regulators of translation (such as EIF4EBP1) and a variety of other signaling-related molecules (like ARHGEF2, DEPTOR, FRS2 or GRB10). Protein kinases (such as RAF1, RPS6KA1/RSK1, RPS6KA3/RSK2, RPS6KA2/RSK3, RPS6KA6/RSK4, SYK, MKNK1/MNK1, MKNK2/MNK2, RPS6KA5/MSK1, RPS6KA4/MSK2, MAPKAPK3 or MAPKAPK5) and phosphatases (such as DUSP1, DUSP4, DUSP6 or DUSP16) are other substrates which enable the propagation the MAPK/ERK signal to additional cytosolic and nuclear targets, thereby extending the specificity of the cascade. This Rattus norvegicus (Rat) protein is Mitogen-activated protein kinase 3 (Mapk3).